A 141-amino-acid chain; its full sequence is Nucleoside triphosphatase NudI (141 aa).

One can recognise a Nudix hydrolase domain in the interval 1–141 (MRQRTIVCPL…RHTLALKGLL (141 aa)). A Nudix box motif is present at residues 38–59 (GGVEPGERIEEALRREIREELG).

It belongs to the Nudix hydrolase family. NudI subfamily. As to quaternary structure, monomer. It depends on Mg(2+) as a cofactor.

It catalyses the reaction a ribonucleoside 5'-triphosphate + H2O = a ribonucleoside 5'-phosphate + diphosphate + H(+). It carries out the reaction a 2'-deoxyribonucleoside 5'-triphosphate + H2O = a 2'-deoxyribonucleoside 5'-phosphate + diphosphate + H(+). The catalysed reaction is dUTP + H2O = dUMP + diphosphate + H(+). The enzyme catalyses dTTP + H2O = dTMP + diphosphate + H(+). It catalyses the reaction dCTP + H2O = dCMP + diphosphate + H(+). Catalyzes the hydrolysis of nucleoside triphosphates, with a preference for pyrimidine deoxynucleoside triphosphates (dUTP, dTTP and dCTP). The polypeptide is Nucleoside triphosphatase NudI (Salmonella heidelberg (strain SL476)).